The chain runs to 347 residues: Gibberellin 3-beta-dioxygenase 2 (347 aa).

The 105-residue stretch at 197-301 (DFQGTQAVIQ…RFSMAYLWGP (105 aa)) folds into the Fe2OG dioxygenase domain. The Fe cation site is built by histidine 225, aspartate 227, and histidine 282. Arginine 292 is an active-site residue. Arginine 292 provides a ligand contact to 2-oxoglutarate.

It belongs to the iron/ascorbate-dependent oxidoreductase family. GA3OX subfamily. Requires L-ascorbate as cofactor. Fe(2+) is required as a cofactor. As to expression, highly expressed in seedlings but also expressed in roots, leaves, stems, flowers, siliques and seeds. Detected predominantly in the hypocotyl and roots of young seedlings and in the petioles and vasculature of leaves. Not expressed in the shoot apical meristem, but found in the elongation zone, the quiescent center cells and the columella cells of the root tips. Found in the cortex and the endodermis of the embryo axis in germinating seeds.

The catalysed reaction is gibberellin A20 + 2-oxoglutarate + O2 = gibberellin A1 + succinate + CO2. It functions in the pathway plant hormone biosynthesis; gibberellin biosynthesis. Its function is as follows. Converts the inactive gibberellin (GA) precursors GA9 and GA20 in the bioactives gibberellins GA4 and GA1. Involved in the production of bioactive GA for vegetative growth and development. The chain is Gibberellin 3-beta-dioxygenase 2 from Arabidopsis thaliana (Mouse-ear cress).